The primary structure comprises 72 residues: Translation initiation factor IF-1 (72 aa).

The S1-like domain occupies 1-72 (MAKEDTIQMQ…TRARIVFRAR (72 aa)).

The protein belongs to the IF-1 family. Component of the 30S ribosomal translation pre-initiation complex which assembles on the 30S ribosome in the order IF-2 and IF-3, IF-1 and N-formylmethionyl-tRNA(fMet); mRNA recruitment can occur at any time during PIC assembly.

Its subcellular location is the cytoplasm. Its function is as follows. One of the essential components for the initiation of protein synthesis. Stabilizes the binding of IF-2 and IF-3 on the 30S subunit to which N-formylmethionyl-tRNA(fMet) subsequently binds. Helps modulate mRNA selection, yielding the 30S pre-initiation complex (PIC). Upon addition of the 50S ribosomal subunit IF-1, IF-2 and IF-3 are released leaving the mature 70S translation initiation complex. This Neisseria gonorrhoeae (strain ATCC 700825 / FA 1090) protein is Translation initiation factor IF-1.